A 189-amino-acid polypeptide reads, in one-letter code: Batroxicidin (189 aa).

The first 22 residues, 1–22 (MQGFFWKTWLVVALCGTSSSLA), serve as a signal peptide directing secretion. A propeptide spanning residues 23–155 (HRPLSYGEAL…DEEKDRPKRV (133 aa)) is cleaved from the precursor. Disulfide bonds link Cys79–Cys90 and Cys101–Cys118. The segment covering 125-148 (EEEEEDEEEQKAEVEKDEEKEDEE) has biased composition (acidic residues). Residues 125 to 152 (EEEEEDEEEQKAEVEKDEEKEDEEKDRP) are disordered.

This sequence belongs to the cathelicidin family. As to expression, expressed by the venom gland.

The protein localises to the secreted. The protein resides in the target cell membrane. In terms of biological role, potent antimicrobial peptide against Gram-negative (MIC=0.25 ug/ml against E.coli ATCC 25922, MIC=1 ug/ml against P.aeruginosa) and Gram-positive bacteria (MIC=32 ug/ml against E.faecalis, MIC=32 ug/ml against S.aureus). Adopts an amphipathic alpha helical conformation, that may allow to partition into the target membrane. Low hemolytic activities have been observed on mammalian cells. In addition, when tested in vitro on the parasite Trypanosoma cruzi (responsible of the Chagas disease), is able to reduce the number of the three forms (epimastigote, trypomastigote and amastigote) by inducing cell death through necrosis. This chain is Batroxicidin, found in Bothrops atrox (Barba amarilla).